The chain runs to 218 residues: Hypoxanthine-guanine phosphoribosyltransferase (218 aa).

Alanine 2 bears the N-acetylalanine mark. Lysine 69 is a binding site for GMP. Residue lysine 103 is modified to N6-acetyllysine. Lysine 115 participates in a covalent cross-link: Glycyl lysine isopeptide (Lys-Gly) (interchain with G-Cter in SUMO1); alternate. Lysine 115 is covalently cross-linked (Glycyl lysine isopeptide (Lys-Gly) (interchain with G-Cter in SUMO2); alternate). GMP-binding positions include 134-142 (EDIIDTGKT), lysine 166, 186-188 (KFV), and aspartate 194. Aspartate 138 serves as the catalytic Proton acceptor. Threonine 142 is subject to Phosphothreonine. Mg(2+) is bound at residue aspartate 194.

It belongs to the purine/pyrimidine phosphoribosyltransferase family. In terms of assembly, homotetramer. It depends on Mg(2+) as a cofactor.

The protein localises to the cytoplasm. It catalyses the reaction IMP + diphosphate = hypoxanthine + 5-phospho-alpha-D-ribose 1-diphosphate. The catalysed reaction is GMP + diphosphate = guanine + 5-phospho-alpha-D-ribose 1-diphosphate. It participates in purine metabolism; IMP biosynthesis via salvage pathway; IMP from hypoxanthine: step 1/1. Its function is as follows. Converts guanine to guanosine monophosphate, and hypoxanthine to inosine monophosphate. Transfers the 5-phosphoribosyl group from 5-phosphoribosylpyrophosphate onto the purine. Plays a central role in the generation of purine nucleotides through the purine salvage pathway. This Sus scrofa (Pig) protein is Hypoxanthine-guanine phosphoribosyltransferase (HPRT1).